The chain runs to 567 residues: Urease subunit alpha (567 aa).

The Urease domain occupies 129–567 (GGIDTHIHWI…LPMAQRYFLF (439 aa)). Histidine 134, histidine 136, and lysine 217 together coordinate Ni(2+). Lysine 217 is subject to N6-carboxylysine. Histidine 219 contacts substrate. Histidine 246 and histidine 272 together coordinate Ni(2+). The Proton donor role is filled by histidine 320. Aspartate 360 is a binding site for Ni(2+).

The protein belongs to the metallo-dependent hydrolases superfamily. Urease alpha subunit family. As to quaternary structure, heterotrimer of UreA (gamma), UreB (beta) and UreC (alpha) subunits. Three heterotrimers associate to form the active enzyme. Ni cation serves as cofactor. Carboxylation allows a single lysine to coordinate two nickel ions.

The protein localises to the cytoplasm. It catalyses the reaction urea + 2 H2O + H(+) = hydrogencarbonate + 2 NH4(+). It functions in the pathway nitrogen metabolism; urea degradation; CO(2) and NH(3) from urea (urease route): step 1/1. The chain is Urease subunit alpha from Enterobacter sp. (strain 638).